Reading from the N-terminus, the 563-residue chain is Rhodopsin kinase GRK1 (563 aa).

The interval 1–15 is interaction with RCVRN; it reads MDFGSLETVVANSAF. Residues 1 to 189 are N-terminal; that stretch reads MDFGSLETVV…LEAQPMGEDW (189 aa). Ser-5 is subject to Phosphoserine. Thr-8 carries the phosphothreonine modification. Ser-21 is subject to Phosphoserine; by PKA and autocatalysis. One can recognise an RGS domain in the interval 58–175; sequence FESVCLEQPI…LGSLYFLRFL (118 aa). The Protein kinase domain maps to 190 to 455; that stretch reads FLDFRVLGKG…CDKLRAHPLF (266 aa). Residues 196 to 204 and Lys-219 each bind ATP; that span reads LGKGGFGEV. Residue Asp-317 is the Proton acceptor of the active site. The AGC-kinase C-terminal domain occupies 456 to 521; sequence KDLNWRQLEA…GNCPIPWQEE (66 aa). Positions 456-563 are C-terminal; it reads KDLNWRQLEA…SSKSGMCLVS (108 aa). At Ser-491 the chain carries Phosphoserine; by autocatalysis. Thr-492 is modified (phosphothreonine; by autocatalysis). Residues 539-563 form a disordered region; sequence QMPDDMKGISGGSSSSSKSGMCLVS. A compositionally biased stretch (low complexity) spans 550–563; that stretch reads GSSSSSKSGMCLVS. A Cysteine methyl ester modification is found at Cys-560. Cys-560 is lipidated: S-farnesyl cysteine. The propeptide at 561–563 is removed in mature form; it reads LVS.

This sequence belongs to the protein kinase superfamily. AGC Ser/Thr protein kinase family. GPRK subfamily. Interacts (via N-terminus) with RCVRN (via C-terminus); the interaction is Ca(2+)-dependent. Interacts (when prenylated) with PDE6D; this promotes release from membranes. May form a complex composed of RHO, GRK1 and RCVRN in a Ca(2+)-dependent manner; RCVRN prevents the interaction between GRK1 and RHO. Autophosphorylated, Ser-21 is a minor site of autophosphorylation compared to Ser-491 and Thr-492. Phosphorylation at Ser-21 is regulated by light and activated by cAMP. Post-translationally, farnesylation is required for full activity. Retinal-specific. Expressed in rods and cones cells.

Its subcellular location is the membrane. It is found in the cell projection. The protein localises to the cilium. It localises to the photoreceptor outer segment. It catalyses the reaction L-threonyl-[rhodopsin] + ATP = O-phospho-L-threonyl-[rhodopsin] + ADP + H(+). It carries out the reaction L-seryl-[rhodopsin] + ATP = O-phospho-L-seryl-[rhodopsin] + ADP + H(+). Inhibited by RCVRN, which prevents the interaction between GRK1 and RHO. Inhibition is calcium-dependent. Inhibited by phosphorylation of Ser-21. Its function is as follows. Retina-specific kinase involved in the signal turnoff via phosphorylation of rhodopsin (RHO), the G protein- coupled receptor that initiates the phototransduction cascade. This rapid desensitization is essential for scotopic vision and permits rapid adaptation to changes in illumination. May play a role in the maintenance of the outer nuclear layer in the retina. This Homo sapiens (Human) protein is Rhodopsin kinase GRK1.